Reading from the N-terminus, the 1072-residue chain is DNA-directed RNA polymerase subunit beta (1072 aa).

The protein belongs to the RNA polymerase beta chain family. In terms of assembly, in plastids the minimal PEP RNA polymerase catalytic core is composed of four subunits: alpha, beta, beta', and beta''. When a (nuclear-encoded) sigma factor is associated with the core the holoenzyme is formed, which can initiate transcription.

It is found in the plastid. Its subcellular location is the chloroplast. The enzyme catalyses RNA(n) + a ribonucleoside 5'-triphosphate = RNA(n+1) + diphosphate. In terms of biological role, DNA-dependent RNA polymerase catalyzes the transcription of DNA into RNA using the four ribonucleoside triphosphates as substrates. In Cycas taitungensis (Prince sago), this protein is DNA-directed RNA polymerase subunit beta.